The sequence spans 200 residues: Imidazoleglycerol-phosphate dehydratase (200 aa).

It belongs to the imidazoleglycerol-phosphate dehydratase family.

It is found in the cytoplasm. It catalyses the reaction D-erythro-1-(imidazol-4-yl)glycerol 3-phosphate = 3-(imidazol-4-yl)-2-oxopropyl phosphate + H2O. It functions in the pathway amino-acid biosynthesis; L-histidine biosynthesis; L-histidine from 5-phospho-alpha-D-ribose 1-diphosphate: step 6/9. The polypeptide is Imidazoleglycerol-phosphate dehydratase (Chlorobium limicola (strain DSM 245 / NBRC 103803 / 6330)).